A 157-amino-acid chain; its full sequence is 2-C-methyl-D-erythritol 2,4-cyclodiphosphate synthase (157 aa).

Aspartate 8 and histidine 10 together coordinate a divalent metal cation. 4-CDP-2-C-methyl-D-erythritol 2-phosphate-binding positions include 8–10 (DVH) and 34–35 (HS). Histidine 42 is a binding site for a divalent metal cation. Residues 56 to 58 (DIG), 132 to 135 (TTNE), and arginine 142 each bind 4-CDP-2-C-methyl-D-erythritol 2-phosphate.

It belongs to the IspF family. Homotrimer. A divalent metal cation is required as a cofactor.

The catalysed reaction is 4-CDP-2-C-methyl-D-erythritol 2-phosphate = 2-C-methyl-D-erythritol 2,4-cyclic diphosphate + CMP. Its pathway is isoprenoid biosynthesis; isopentenyl diphosphate biosynthesis via DXP pathway; isopentenyl diphosphate from 1-deoxy-D-xylulose 5-phosphate: step 4/6. Functionally, involved in the biosynthesis of isopentenyl diphosphate (IPP) and dimethylallyl diphosphate (DMAPP), two major building blocks of isoprenoid compounds. Catalyzes the conversion of 4-diphosphocytidyl-2-C-methyl-D-erythritol 2-phosphate (CDP-ME2P) to 2-C-methyl-D-erythritol 2,4-cyclodiphosphate (ME-CPP) with a corresponding release of cytidine 5-monophosphate (CMP). The sequence is that of 2-C-methyl-D-erythritol 2,4-cyclodiphosphate synthase from Prosthecochloris aestuarii (strain DSM 271 / SK 413).